The following is a 178-amino-acid chain: Cytochrome b6-f complex iron-sulfur subunit (178 aa).

A helical membrane pass occupies residues 20-42; the sequence is LLTFGTATGVALGALYPVANYFM. Residues 65–161 enclose the Rieske domain; that stretch reads KTGWLATHQA…VDIEDDAVLV (97 aa). Positions 107, 109, 125, and 128 each coordinate [2Fe-2S] cluster. The cysteines at positions 112 and 127 are disulfide-linked.

The protein belongs to the Rieske iron-sulfur protein family. In terms of assembly, the 4 large subunits of the cytochrome b6-f complex are cytochrome b6, subunit IV (17 kDa polypeptide, PetD), cytochrome f and the Rieske protein, while the 4 small subunits are PetG, PetL, PetM and PetN. The complex functions as a dimer. The cofactor is [2Fe-2S] cluster.

It is found in the cellular thylakoid membrane. The catalysed reaction is 2 oxidized [plastocyanin] + a plastoquinol + 2 H(+)(in) = 2 reduced [plastocyanin] + a plastoquinone + 4 H(+)(out). Component of the cytochrome b6-f complex, which mediates electron transfer between photosystem II (PSII) and photosystem I (PSI), cyclic electron flow around PSI, and state transitions. This is Cytochrome b6-f complex iron-sulfur subunit from Prochlorococcus marinus (strain AS9601).